The primary structure comprises 131 residues: C-glycoside deglycosidase beta subunit (131 aa).

The protein belongs to the C-glycoside deglycosidase beta subunit family. In terms of assembly, heterodimer composed of an alpha subunit (CarB) and a beta subunit (CarC). It depends on a divalent metal cation as a cofactor.

The catalysed reaction is 3''-dehydroisovitexin = 1,5-anhydro-D-erythro-hex-1-en-3-ulose + apigenin. It catalyses the reaction 3''-dehydroisoorientin = 1,5-anhydro-D-erythro-hex-1-en-3-ulose + luteolin. In terms of biological role, carbon-carbon bond-cleaving enzyme which participates in the metabolism of C-glycosides. Acts on the C6-glycosylated compounds 3''-dehydroisovitexin (3''-oxo-isovitexin) and 3''-dehydroisoorientin (3''-oxo-homoorientin). Shows weak activity with 3'-dehydromangiferin (3'-oxo-mangiferin). The chain is C-glycoside deglycosidase beta subunit from Microbacterium trichothecenolyticum (Aureobacterium trichothecenolyticum).